A 183-amino-acid polypeptide reads, in one-letter code: Dual-action ribosomal maturation protein DarP (183 aa).

The protein belongs to the DarP family.

It is found in the cytoplasm. Member of a network of 50S ribosomal subunit biogenesis factors which assembles along the 30S-50S interface, preventing incorrect 23S rRNA structures from forming. Promotes peptidyl transferase center (PTC) maturation. The sequence is that of Dual-action ribosomal maturation protein DarP from Citrobacter koseri (strain ATCC BAA-895 / CDC 4225-83 / SGSC4696).